Reading from the N-terminus, the 76-residue chain is DNA-binding protein S1FA2 (76 aa).

Positions 50–55 (PPRKKK) match the Nuclear localization signal motif. Over residues 51-66 (PRKKKPLSKKKLKREK) the composition is skewed to basic residues. Residues 51 to 76 (PRKKKPLSKKKLKREKLKQGVPVPGE) form a disordered region.

Belongs to the S1FA transcription factor family.

Its subcellular location is the nucleus. In terms of biological role, DNA-binding protein that specifically recognizes a negative element (S1F) within the RPS1 promoter. This Arabidopsis thaliana (Mouse-ear cress) protein is DNA-binding protein S1FA2 (S1FA2).